A 177-amino-acid polypeptide reads, in one-letter code: Thioredoxin M-type, chloroplastic (177 aa).

The transit peptide at 1 to 64 (MAAFTCTSSP…SRLRRGGIIC (64 aa)) directs the protein to the chloroplast. The Thioredoxin domain occupies 65–177 (EAQDTATGIP…LATSIDKFLQ (113 aa)). Catalysis depends on nucleophile residues Cys-101 and Cys-104. A disulfide bridge connects residues Cys-101 and Cys-104.

The protein belongs to the thioredoxin family. Plant M-type subfamily. In terms of assembly, forms a complex with heterodimeric ferredoxin-thioredoxin reductase (FTR) and ferredoxin.

It localises to the plastid. The protein localises to the chloroplast. In terms of biological role, participates in various redox reactions through the reversible oxidation of the active center dithiol to a disulfide. The M form is known to activate NADP-malate dehydrogenase. The protein is Thioredoxin M-type, chloroplastic of Brassica napus (Rape).